Here is a 184-residue protein sequence, read N- to C-terminus: ATP synthase subunit delta (184 aa).

Belongs to the ATPase delta chain family. F-type ATPases have 2 components, F(1) - the catalytic core - and F(0) - the membrane proton channel. F(1) has five subunits: alpha(3), beta(3), gamma(1), delta(1), epsilon(1). F(0) has three main subunits: a(1), b(2) and c(10-14). The alpha and beta chains form an alternating ring which encloses part of the gamma chain. F(1) is attached to F(0) by a central stalk formed by the gamma and epsilon chains, while a peripheral stalk is formed by the delta and b chains.

The protein resides in the cell membrane. Functionally, f(1)F(0) ATP synthase produces ATP from ADP in the presence of a proton or sodium gradient. F-type ATPases consist of two structural domains, F(1) containing the extramembraneous catalytic core and F(0) containing the membrane proton channel, linked together by a central stalk and a peripheral stalk. During catalysis, ATP synthesis in the catalytic domain of F(1) is coupled via a rotary mechanism of the central stalk subunits to proton translocation. Its function is as follows. This protein is part of the stalk that links CF(0) to CF(1). It either transmits conformational changes from CF(0) to CF(1) or is implicated in proton conduction. The protein is ATP synthase subunit delta of Rickettsia africae (strain ESF-5).